The sequence spans 347 residues: MNPLAQPIIYPTIFTGTLITALSSHWFFAWLGLEMNMLAFIPVLTKKTSPRSTEAAIKYFLTQATASMILLMAILYNNMLSGQWTTTNTTNPYSSLMIVTALAMKLGMAPFHFWVPEVTQGVPLTSGLLLLTWQKLAPISIMYQMSSSVDTNILLTLSILSILVGGWGGLNQTQLRKILAYSSITHMGWMMAVLPYNPDITILNLIIYIILTTTAFLILDLNSSVTILMLTRTWNKLTWLMPLIPSTLLSLGGLPPLTGFLPKWAIIEEFAKNGNLITPTIMAIITLLNLYFYVRLIYATSITLLPMSNNAKMKWQFENTKPTPLLPTLTILTTLLLPISPLILSIS.

10 consecutive transmembrane segments (helical) span residues 13–33 (IFTG…WLGL), 55–75 (AAIK…MAIL), 96–116 (LMIV…FWVP), 122–142 (VPLT…ISIM), 151–171 (TNIL…GGLN), 178–198 (ILAY…PYNP), 199–219 (DITI…FLIL), 237–257 (LTWL…LPPL), 274–294 (GNLI…YFYV), and 326–346 (LPTL…ILSI).

It belongs to the complex I subunit 2 family. As to quaternary structure, core subunit of respiratory chain NADH dehydrogenase (Complex I) which is composed of 45 different subunits. Interacts with TMEM242.

The protein localises to the mitochondrion inner membrane. The catalysed reaction is a ubiquinone + NADH + 5 H(+)(in) = a ubiquinol + NAD(+) + 4 H(+)(out). Its function is as follows. Core subunit of the mitochondrial membrane respiratory chain NADH dehydrogenase (Complex I) which catalyzes electron transfer from NADH through the respiratory chain, using ubiquinone as an electron acceptor. Essential for the catalytic activity and assembly of complex I. The polypeptide is NADH-ubiquinone oxidoreductase chain 2 (Pongo abelii (Sumatran orangutan)).